A 219-amino-acid chain; its full sequence is Thiamine-phosphate synthase (219 aa).

4-amino-2-methyl-5-(diphosphooxymethyl)pyrimidine contacts are provided by residues 45-49 (QYREK) and N77. Mg(2+) is bound by residues D78 and D97. Residue T116 coordinates 4-amino-2-methyl-5-(diphosphooxymethyl)pyrimidine. 2-[(2R,5Z)-2-carboxy-4-methylthiazol-5(2H)-ylidene]ethyl phosphate is bound at residue 142–144 (SFT). K145 contacts 4-amino-2-methyl-5-(diphosphooxymethyl)pyrimidine. 2-[(2R,5Z)-2-carboxy-4-methylthiazol-5(2H)-ylidene]ethyl phosphate is bound by residues G173 and 193 to 194 (VT).

Belongs to the thiamine-phosphate synthase family. Mg(2+) is required as a cofactor.

The catalysed reaction is 2-[(2R,5Z)-2-carboxy-4-methylthiazol-5(2H)-ylidene]ethyl phosphate + 4-amino-2-methyl-5-(diphosphooxymethyl)pyrimidine + 2 H(+) = thiamine phosphate + CO2 + diphosphate. The enzyme catalyses 2-(2-carboxy-4-methylthiazol-5-yl)ethyl phosphate + 4-amino-2-methyl-5-(diphosphooxymethyl)pyrimidine + 2 H(+) = thiamine phosphate + CO2 + diphosphate. It carries out the reaction 4-methyl-5-(2-phosphooxyethyl)-thiazole + 4-amino-2-methyl-5-(diphosphooxymethyl)pyrimidine + H(+) = thiamine phosphate + diphosphate. It participates in cofactor biosynthesis; thiamine diphosphate biosynthesis; thiamine phosphate from 4-amino-2-methyl-5-diphosphomethylpyrimidine and 4-methyl-5-(2-phosphoethyl)-thiazole: step 1/1. In terms of biological role, condenses 4-methyl-5-(beta-hydroxyethyl)thiazole monophosphate (THZ-P) and 2-methyl-4-amino-5-hydroxymethyl pyrimidine pyrophosphate (HMP-PP) to form thiamine monophosphate (TMP). The sequence is that of Thiamine-phosphate synthase from Caldicellulosiruptor bescii (strain ATCC BAA-1888 / DSM 6725 / KCTC 15123 / Z-1320) (Anaerocellum thermophilum).